The chain runs to 1098 residues: Ubiquitin carboxyl-terminal hydrolase 36 (1098 aa).

Positions 72 to 86 are enriched in basic and acidic residues; it reads RHRSGDELQARKPGT. The interval 72–97 is disordered; sequence RHRSGDELQARKPGTERVSGSGGDGV. The 302-residue stretch at 122–423 folds into the USP domain; it reads AGLHNLGNTC…QAYVLFYLRI (302 aa). The active-site Nucleophile is cysteine 131. Residue histidine 382 is the Proton acceptor of the active site. Disordered regions lie at residues 428–464 and 483–574; these read KSPE…VPSP and EVGV…RDTI. Phosphoserine is present on residues serine 429, serine 463, serine 547, and serine 578. The span at 540–558 shows a compositional bias: low complexity; that stretch reads PLQSLTTSPTTSQGSPGTG. The disordered stretch occupies residues 589 to 640; the sequence is GHRLKGEGSGVDLEKGDSSSSSPEHSASSDPAKAPQTAESRAAHACDSQGTN. Residues 606 to 617 show a composition bias toward low complexity; that stretch reads SSSSSPEHSASS. Serine 663 bears the Phosphoserine mark. Disordered regions lie at residues 664–710 and 722–973; these read PALS…SPSA and HPVV…ALSV. A compositionally biased stretch (polar residues) spans 665 to 677; that stretch reads ALSSTTTEPTSLM. Serine 678 is subject to Phosphoserine. Low complexity predominate over residues 683–692; the sequence is KKLALSAKKA. Serine 709 is subject to Phosphoserine. Residues 746–763 are compositionally biased toward low complexity; the sequence is HPHSASLSSSSAKPLGTS. The span at 853 to 878 shows a compositional bias: polar residues; it reads GQFQDQSWSSGSQKEEGTQPQVNGHQ. Basic residues predominate over residues 889–898; that stretch reads SSRKRRKRKR. The segment covering 901–917 has biased composition (polar residues); sequence GLSQEATPSQDLIQHSC. The span at 921–932 shows a compositional bias: basic and acidic residues; it reads DHSEPEARTELQ. Residues 933 to 943 show a composition bias toward basic residues; that stretch reads KKKKKKRRKRK. Residues 944-960 are compositionally biased toward basic and acidic residues; it reads PEPQQDEESKHPGDQRS.

This sequence belongs to the peptidase C19 family. Interacts with isoform 3 of FBXW7; the interaction inhibits MYC degradation induced by SCF(FBW7) complex. Interacts with NTRK1; USP36 does not deubiquitinate NTRK1. Interacts with NEDD4L (via domains WW1, 3 and 4); the interaction inhibits ubiquitination of, at least, NTRK1, KCNQ2 and KCNQ3 by NEDD4L. Interacts (via C-terminus) with EXOSC10 (via C-terminus); the interaction is facilitated by the association with RNA and promotes sumoylation of EXOSC10. In terms of processing, polyubiquitinated by NEDD4L, no effect on USP36 protein levels. Both proteins interact with and regulate each other's ubiquitination levels.

Its subcellular location is the nucleus. It localises to the nucleolus. The protein resides in the cytoplasm. The catalysed reaction is Thiol-dependent hydrolysis of ester, thioester, amide, peptide and isopeptide bonds formed by the C-terminal Gly of ubiquitin (a 76-residue protein attached to proteins as an intracellular targeting signal).. Deubiquitinase essential for the regulation of nucleolar structure and function. Required for cell and organism viability. Plays an important role in ribosomal RNA processing and protein synthesis, which is mediated, at least in part, through deubiquitination of DHX33, NPM1 and FBL, regulating their protein stability. Functions as a transcriptional repressor by deubiquiting histone H2B at the promoters of genes critical for cellular differentiation, such as CDKN1A, thereby preventing histone H3 'Lys-4' trimethylation (H3K4). Specifically deubiquitinates MYC in the nucleolus, leading to prevent MYC degradation by the proteasome: acts by specifically interacting with isoform 3 of FBXW7 (FBW7gamma) in the nucleolus and counteracting ubiquitination of MYC by the SCF(FBW7) complex. In contrast, it does not interact with isoform 1 of FBXW7 (FBW7alpha) in the nucleoplasm. Interacts to and regulates the actions of E3 ubiquitin-protein ligase NEDD4L over substrates such as NTRK1, KCNQ2 and KCNQ3, affecting their expression an functions. Deubiquitinates SOD2, regulates SOD2 protein stability. Deubiquitinase activity is required to control selective autophagy activation by ubiquitinated proteins. Promotes CEP63 stabilization through 'Lys-48'-linked deubiquitination leading to increased stability. Acts as a SUMO ligase to promote EXOSC10 sumoylation critical for the nucleolar RNA exosome function in rRNA processing. Binds to pre-rRNAs. The protein is Ubiquitin carboxyl-terminal hydrolase 36 (Usp36) of Mus musculus (Mouse).